We begin with the raw amino-acid sequence, 135 residues long: MAELIEYYGTGRRKTAVARVHLRPGNGKIKINGKEYKSLVEYLRGNEVWEIEALKPLTVTSTNGQFDLVIRVNGGGLSGQAGAIRLGIARALLSYDESFRPILKKEGLLTRDPREVERKKYGLRKARKRAQFSKR.

This sequence belongs to the universal ribosomal protein uS9 family.

The sequence is that of Small ribosomal subunit protein uS9 from Petrotoga mobilis (strain DSM 10674 / SJ95).